A 473-amino-acid chain; its full sequence is Photosystem II CP43 reaction center protein (473 aa).

The propeptide occupies 1–14; the sequence is MKNLYSLRRFYHVE. N-acetylthreonine is present on Thr15. Residue Thr15 is modified to Phosphothreonine. A run of 5 helical transmembrane segments spans residues 69 to 93, 134 to 155, 178 to 200, 255 to 275, and 291 to 312; these read LFEV…PHLA, LIGP…KDKN, KARY…RVIT, KPFG…LSYS, and WFNN…ASQA. Residue Glu367 coordinates [CaMn4O5] cluster. A helical membrane pass occupies residues 447–471; sequence RARAAAAGFEKGIDRDTEPTLFMRP.

This sequence belongs to the PsbB/PsbC family. PsbC subfamily. As to quaternary structure, PSII is composed of 1 copy each of membrane proteins PsbA, PsbB, PsbC, PsbD, PsbE, PsbF, PsbH, PsbI, PsbJ, PsbK, PsbL, PsbM, PsbT, PsbX, PsbY, PsbZ, Psb30/Ycf12, at least 3 peripheral proteins of the oxygen-evolving complex and a large number of cofactors. It forms dimeric complexes. It depends on Binds multiple chlorophylls and provides some of the ligands for the Ca-4Mn-5O cluster of the oxygen-evolving complex. It may also provide a ligand for a Cl- that is required for oxygen evolution. PSII binds additional chlorophylls, carotenoids and specific lipids. as a cofactor.

It localises to the plastid. The protein resides in the chloroplast thylakoid membrane. Functionally, one of the components of the core complex of photosystem II (PSII). It binds chlorophyll and helps catalyze the primary light-induced photochemical processes of PSII. PSII is a light-driven water:plastoquinone oxidoreductase, using light energy to abstract electrons from H(2)O, generating O(2) and a proton gradient subsequently used for ATP formation. This chain is Photosystem II CP43 reaction center protein, found in Nephroselmis olivacea (Green alga).